Consider the following 450-residue polypeptide: uncharacterized protein (450 aa).

The TRAM domain maps to 1 to 58 (MQKNQIVDLEITDLSYEAMGVAHLDGMTVFVNNALPGEIVSAKLLKVKKNFAFAKIEK). Residues Gln280, Tyr309, Glu330, and Asp378 each coordinate S-adenosyl-L-methionine. The active-site Nucleophile is Cys405.

This sequence belongs to the class I-like SAM-binding methyltransferase superfamily. RNA M5U methyltransferase family.

This is an uncharacterized protein from Lactobacillus johnsonii (strain CNCM I-12250 / La1 / NCC 533).